Here is a 245-residue protein sequence, read N- to C-terminus: 1-(5-phosphoribosyl)-5-[(5-phosphoribosylamino)methylideneamino] imidazole-4-carboxamide isomerase (245 aa).

Aspartate 7 acts as the Proton acceptor in catalysis. Residue aspartate 129 is the Proton donor of the active site.

This sequence belongs to the HisA/HisF family.

The protein resides in the cytoplasm. The enzyme catalyses 1-(5-phospho-beta-D-ribosyl)-5-[(5-phospho-beta-D-ribosylamino)methylideneamino]imidazole-4-carboxamide = 5-[(5-phospho-1-deoxy-D-ribulos-1-ylimino)methylamino]-1-(5-phospho-beta-D-ribosyl)imidazole-4-carboxamide. It functions in the pathway amino-acid biosynthesis; L-histidine biosynthesis; L-histidine from 5-phospho-alpha-D-ribose 1-diphosphate: step 4/9. The protein is 1-(5-phosphoribosyl)-5-[(5-phosphoribosylamino)methylideneamino] imidazole-4-carboxamide isomerase of Vibrio campbellii (strain ATCC BAA-1116).